Here is a 616-residue protein sequence, read N- to C-terminus: Dihydroxy-acid dehydratase (616 aa).

D81 provides a ligand contact to Mg(2+). [2Fe-2S] cluster is bound at residue C122. Mg(2+)-binding residues include D123 and K124. N6-carboxylysine is present on K124. C195 lines the [2Fe-2S] cluster pocket. Mg(2+) is bound at residue E491. S517 functions as the Proton acceptor in the catalytic mechanism.

Belongs to the IlvD/Edd family. In terms of assembly, homodimer. The cofactor is [2Fe-2S] cluster. It depends on Mg(2+) as a cofactor.

It catalyses the reaction (2R)-2,3-dihydroxy-3-methylbutanoate = 3-methyl-2-oxobutanoate + H2O. It carries out the reaction (2R,3R)-2,3-dihydroxy-3-methylpentanoate = (S)-3-methyl-2-oxopentanoate + H2O. Its pathway is amino-acid biosynthesis; L-isoleucine biosynthesis; L-isoleucine from 2-oxobutanoate: step 3/4. It functions in the pathway amino-acid biosynthesis; L-valine biosynthesis; L-valine from pyruvate: step 3/4. Functionally, functions in the biosynthesis of branched-chain amino acids. Catalyzes the dehydration of (2R,3R)-2,3-dihydroxy-3-methylpentanoate (2,3-dihydroxy-3-methylvalerate) into 2-oxo-3-methylpentanoate (2-oxo-3-methylvalerate) and of (2R)-2,3-dihydroxy-3-methylbutanoate (2,3-dihydroxyisovalerate) into 2-oxo-3-methylbutanoate (2-oxoisovalerate), the penultimate precursor to L-isoleucine and L-valine, respectively. The sequence is that of Dihydroxy-acid dehydratase from Methylobacillus flagellatus (strain ATCC 51484 / DSM 6875 / VKM B-1610 / KT).